A 438-amino-acid chain; its full sequence is Adenosylhomocysteinase (438 aa).

Substrate is bound by residues threonine 64, aspartate 139, and glutamate 164. 165-167 (TTT) is a binding site for NAD(+). Residues lysine 194 and aspartate 198 each coordinate substrate. Residues asparagine 199, 228–233 (GYGDVG), glutamate 251, asparagine 286, 307–309 (IGH), and asparagine 352 contribute to the NAD(+) site.

Belongs to the adenosylhomocysteinase family. NAD(+) is required as a cofactor.

It is found in the cytoplasm. It catalyses the reaction S-adenosyl-L-homocysteine + H2O = L-homocysteine + adenosine. It functions in the pathway amino-acid biosynthesis; L-homocysteine biosynthesis; L-homocysteine from S-adenosyl-L-homocysteine: step 1/1. Functionally, may play a key role in the regulation of the intracellular concentration of adenosylhomocysteine. This chain is Adenosylhomocysteinase, found in Coxiella burnetii (strain CbuK_Q154) (Coxiella burnetii (strain Q154)).